We begin with the raw amino-acid sequence, 405 residues long: BRCA1-A complex subunit Abraxas 1 (405 aa).

Residues 7-154 (LGVLSGFVLG…CTHCLEHGLY (148 aa)) enclose the MPN domain. At Ser48 the chain carries Phosphoserine. Positions 208-262 (SLKEVRKINEMYAAIQEELKTICQKVEQSEREVEKLLMDVNRLKEVRKKQQAQAK) form a coiled coil. Residues 333–405 (ASPAPAAPLS…DTDYPRSPTF (73 aa)) form a disordered region. Phosphoserine is present on residues Ser382, Ser383, Ser392, and Ser402. Residues 386–397 (IDTEVGSPEDDT) show a composition bias toward acidic residues. The pSXXF motif signature appears at 402–405 (SPTF).

The protein belongs to the FAM175 family. Abraxas subfamily. In terms of assembly, component of the ARISC complex, at least composed of UIMC1/RAP80, ABRAXAS1, BRCC3/BRCC36, BABAM2 and BABAM1/NBA1. Component of the BRCA1-A complex, at least composed of the BRCA1, BARD1, UIMC1/RAP80, ABRAXAS1, BRCC3/BRCC36, BABAM2 and BABAM1/NBA1. In the complex, interacts directly with UIMC1/RAP80, BRCC3/BRCC36 and BABAM2. Homodimer. Interacts directly (when phosphorylated at Ser-402) with BRCA1. The phosphorylated homodimer can interact directly with two BRCA1 chains, giving rise to a heterotetramer. Binds polyubiquitin. In terms of processing, phosphorylation of Ser-402 of the pSXXF motif by ATM or ATR constitutes a specific recognition motif for the BRCT domain of BRCA1.

The protein localises to the nucleus. Functionally, involved in DNA damage response and double-strand break (DSB) repair. Component of the BRCA1-A complex, acting as a central scaffold protein that assembles the various components of the complex and mediates the recruitment of BRCA1. The BRCA1-A complex specifically recognizes 'Lys-63'-linked ubiquitinated histones H2A and H2AX at DNA lesion sites, leading to target the BRCA1-BARD1 heterodimer to sites of DNA damage at DSBs. This complex also possesses deubiquitinase activity that specifically removes 'Lys-63'-linked ubiquitin on histones H2A and H2AX. The polypeptide is BRCA1-A complex subunit Abraxas 1 (Rattus norvegicus (Rat)).